We begin with the raw amino-acid sequence, 288 residues long: Anthranilate synthase beta subunit 1, chloroplastic (288 aa).

A chloroplast-targeting transit peptide spans 1–58 (MACSHLAAAAAAASPAAARSPAASSAATASAFARLSATPRVASGGLAVRGQRGVAAVV). The Glutamine amidotransferase type-1 domain occupies 83–282 (PIIVIDNYDS…VRFIEELEKQ (200 aa)). 134-136 (GPG) is an L-glutamine binding site. Cys-161 acts as the Nucleophile in catalysis. L-glutamine is bound by residues Gln-165 and 215 to 216 (SL). Residues His-256 and Glu-258 contribute to the active site.

As to quaternary structure, heterotetramer consisting of two non-identical subunits: a beta subunit and a large alpha subunit. In terms of tissue distribution, expressed in roots and leaves.

It localises to the plastid. Its subcellular location is the chloroplast. The catalysed reaction is chorismate + L-glutamine = anthranilate + pyruvate + L-glutamate + H(+). The protein operates within amino-acid biosynthesis; L-tryptophan biosynthesis; L-tryptophan from chorismate: step 1/5. In terms of biological role, part of a heterotetrameric complex that catalyzes the two-step biosynthesis of anthranilate, an intermediate in the biosynthesis of L-tryptophan. In the first step, the glutamine-binding beta subunit of anthranilate synthase (AS) provides the glutamine amidotransferase activity which generates ammonia as a substrate that, along with chorismate, is used in the second step, catalyzed by the large alpha subunit of AS to produce anthranilate. The sequence is that of Anthranilate synthase beta subunit 1, chloroplastic from Oryza sativa subsp. japonica (Rice).